The primary structure comprises 188 residues: ATP-dependent protease subunit HslV (188 aa).

Thr14 is a catalytic residue. The Na(+) site is built by Ala173, Cys176, and Thr179.

This sequence belongs to the peptidase T1B family. HslV subfamily. As to quaternary structure, a double ring-shaped homohexamer of HslV is capped on each side by a ring-shaped HslU homohexamer. The assembly of the HslU/HslV complex is dependent on binding of ATP.

It localises to the cytoplasm. The enzyme catalyses ATP-dependent cleavage of peptide bonds with broad specificity.. Allosterically activated by HslU binding. Protease subunit of a proteasome-like degradation complex believed to be a general protein degrading machinery. The protein is ATP-dependent protease subunit HslV of Caulobacter vibrioides (strain ATCC 19089 / CIP 103742 / CB 15) (Caulobacter crescentus).